Reading from the N-terminus, the 288-residue chain is Diaminopimelate epimerase (288 aa).

Positions 14 and 67 each coordinate substrate. Residue Cys-76 is the Proton donor of the active site. Residues 77-78 (GN), Asn-166, Asn-199, and 217-218 (ER) each bind substrate. Cys-226 (proton acceptor) is an active-site residue. 227-228 (GT) provides a ligand contact to substrate.

This sequence belongs to the diaminopimelate epimerase family. In terms of assembly, homodimer.

The protein resides in the cytoplasm. It catalyses the reaction (2S,6S)-2,6-diaminopimelate = meso-2,6-diaminopimelate. It participates in amino-acid biosynthesis; L-lysine biosynthesis via DAP pathway; DL-2,6-diaminopimelate from LL-2,6-diaminopimelate: step 1/1. Functionally, catalyzes the stereoinversion of LL-2,6-diaminopimelate (L,L-DAP) to meso-diaminopimelate (meso-DAP), a precursor of L-lysine and an essential component of the bacterial peptidoglycan. This is Diaminopimelate epimerase from Bacillus anthracis (strain A0248).